A 676-amino-acid polypeptide reads, in one-letter code: Mediator of RNA polymerase II transcription subunit 17 (676 aa).

Disordered stretches follow at residues 27-68 (IGSK…QFSN) and 117-176 (IEND…TQDT). Over residues 29–40 (SKSTSPHSNSTS) the composition is skewed to low complexity. 2 stretches are compositionally biased toward basic and acidic residues: residues 47–56 (HNTENEEVDN) and 120–134 (DNGK…KAED). Residues 135–145 (GIDTMDIDQND) are compositionally biased toward acidic residues. Positions 146–160 (NSEANTNDIGYNEWS) are enriched in polar residues.

It belongs to the Mediator complex subunit 17 family. As to quaternary structure, component of the Mediator complex.

The protein resides in the nucleus. Functionally, component of the Mediator complex, a coactivator involved in the regulated transcription of nearly all RNA polymerase II-dependent genes. Mediator functions as a bridge to convey information from gene-specific regulatory proteins to the basal RNA polymerase II transcription machinery. Mediator is recruited to promoters by direct interactions with regulatory proteins and serves as a scaffold for the assembly of a functional preinitiation complex with RNA polymerase II and the general transcription factors. The chain is Mediator of RNA polymerase II transcription subunit 17 (SRB4) from Candida glabrata (strain ATCC 2001 / BCRC 20586 / JCM 3761 / NBRC 0622 / NRRL Y-65 / CBS 138) (Yeast).